The primary structure comprises 146 residues: Leghemoglobin alpha (146 aa).

Residues Ala-3–Ala-146 form the Globin domain. A nitrated tyrosine mark is found at Tyr-26 and Tyr-31. Residue Ser-46 coordinates heme b. Ser-46 is modified (phosphoserine). O2 is bound at residue His-62. Positions 93 and 96 each coordinate heme b. Position 134 is a nitrated tyrosine (Tyr-134).

Belongs to the plant globin family. As to quaternary structure, monomer. Post-translationally, nitrated mainly at Tyr-31 and, to a lower extent, at Tyr-26 and Tyr-134, in effective nodules and particularly in hypoxic conditions; this mechanism may play a protective role in the symbiosis by buffering toxic peroxynitrite NO(2)(-). Nitration level decrease during nodule senescence. In terms of processing, phosphorylation at Ser-46 disrupts the molecular environment of its porphyrin ring oxygen binding pocket, thus leading to a reduced oxygen consumption and to the delivery of oxygen O(2) to symbiosomes. Root nodules.

It is found in the cytoplasm. The protein localises to the cytosol. It localises to the nucleus. Its function is as follows. Leghemoglobin that reversibly binds oxygen O(2) through a pentacoordinated heme iron. In root nodules, facilitates the diffusion of oxygen to the bacteroids while preventing the bacterial nitrogenase from being inactivated by buffering dioxygen, nitric oxide and carbon monoxide, and promoting the formation of reactive oxygen species (ROS, e.g. H(2)O(2)). This role is essential for symbiotic nitrogen fixation (SNF). The polypeptide is Leghemoglobin alpha (Phaseolus vulgaris (Kidney bean)).